The sequence spans 271 residues: Dermonecrotic toxin LhSicTox-alphaIA2bv (271 aa).

Histidine 3 is a catalytic residue. Mg(2+) is bound by residues glutamate 23 and aspartate 25. Cystine bridges form between cysteine 43/cysteine 49 and cysteine 45/cysteine 188. Position 83 (aspartate 83) interacts with Mg(2+).

The protein belongs to the arthropod phospholipase D family. Class II subfamily. The cofactor is Mg(2+). In terms of tissue distribution, expressed by the venom gland.

The protein resides in the secreted. It catalyses the reaction an N-(acyl)-sphingosylphosphocholine = an N-(acyl)-sphingosyl-1,3-cyclic phosphate + choline. The enzyme catalyses an N-(acyl)-sphingosylphosphoethanolamine = an N-(acyl)-sphingosyl-1,3-cyclic phosphate + ethanolamine. The catalysed reaction is a 1-acyl-sn-glycero-3-phosphocholine = a 1-acyl-sn-glycero-2,3-cyclic phosphate + choline. It carries out the reaction a 1-acyl-sn-glycero-3-phosphoethanolamine = a 1-acyl-sn-glycero-2,3-cyclic phosphate + ethanolamine. In terms of biological role, dermonecrotic toxins cleave the phosphodiester linkage between the phosphate and headgroup of certain phospholipids (sphingolipid and lysolipid substrates), forming an alcohol (often choline) and a cyclic phosphate. This toxin acts on sphingomyelin (SM). It may also act on ceramide phosphoethanolamine (CPE), lysophosphatidylcholine (LPC) and lysophosphatidylethanolamine (LPE), but not on lysophosphatidylserine (LPS), and lysophosphatidylglycerol (LPG). It acts by transphosphatidylation, releasing exclusively cyclic phosphate products as second products. Induces dermonecrosis, hemolysis, increased vascular permeability, edema, inflammatory response, and platelet aggregation. This chain is Dermonecrotic toxin LhSicTox-alphaIA2bv, found in Loxosceles hirsuta (Recluse spider).